The chain runs to 68 residues: Large ribosomal subunit protein bL33c (68 aa).

This sequence belongs to the bacterial ribosomal protein bL33 family.

The protein localises to the plastid. It localises to the chloroplast. The protein is Large ribosomal subunit protein bL33c of Amborella trichopoda.